A 269-amino-acid chain; its full sequence is Hydroxyethylthiazole kinase (269 aa).

M45 contributes to the substrate binding site. Residues R121 and T167 each contribute to the ATP site. G194 lines the substrate pocket.

The protein belongs to the Thz kinase family. The cofactor is Mg(2+).

The catalysed reaction is 5-(2-hydroxyethyl)-4-methylthiazole + ATP = 4-methyl-5-(2-phosphooxyethyl)-thiazole + ADP + H(+). It participates in cofactor biosynthesis; thiamine diphosphate biosynthesis; 4-methyl-5-(2-phosphoethyl)-thiazole from 5-(2-hydroxyethyl)-4-methylthiazole: step 1/1. In terms of biological role, catalyzes the phosphorylation of the hydroxyl group of 4-methyl-5-beta-hydroxyethylthiazole (THZ). The chain is Hydroxyethylthiazole kinase from Brevibacillus brevis (strain 47 / JCM 6285 / NBRC 100599).